A 345-amino-acid chain; its full sequence is Anthranilate phosphoribosyltransferase (345 aa).

5-phospho-alpha-D-ribose 1-diphosphate is bound by residues Gly-80, 83–84 (GD), Thr-88, 90–93 (NIST), 108–116 (KHGNRSVSS), and Ser-120. Position 80 (Gly-80) interacts with anthranilate. Mg(2+) is bound at residue Ser-92. Asn-111 is an anthranilate binding site. Arg-166 contributes to the anthranilate binding site. The Mg(2+) site is built by Asp-225 and Glu-226.

It belongs to the anthranilate phosphoribosyltransferase family. Homodimer. The cofactor is Mg(2+).

The catalysed reaction is N-(5-phospho-beta-D-ribosyl)anthranilate + diphosphate = 5-phospho-alpha-D-ribose 1-diphosphate + anthranilate. It participates in amino-acid biosynthesis; L-tryptophan biosynthesis; L-tryptophan from chorismate: step 2/5. Its function is as follows. Catalyzes the transfer of the phosphoribosyl group of 5-phosphorylribose-1-pyrophosphate (PRPP) to anthranilate to yield N-(5'-phosphoribosyl)-anthranilate (PRA). This Pelotomaculum thermopropionicum (strain DSM 13744 / JCM 10971 / SI) protein is Anthranilate phosphoribosyltransferase.